A 250-amino-acid chain; its full sequence is Pyrroloquinoline-quinone synthase (250 aa).

The protein belongs to the PqqC family.

The catalysed reaction is 6-(2-amino-2-carboxyethyl)-7,8-dioxo-1,2,3,4,7,8-hexahydroquinoline-2,4-dicarboxylate + 3 O2 = pyrroloquinoline quinone + 2 H2O2 + 2 H2O + H(+). The protein operates within cofactor biosynthesis; pyrroloquinoline quinone biosynthesis. In terms of biological role, ring cyclization and eight-electron oxidation of 3a-(2-amino-2-carboxyethyl)-4,5-dioxo-4,5,6,7,8,9-hexahydroquinoline-7,9-dicarboxylic-acid to PQQ. In Xanthomonas oryzae pv. oryzae (strain MAFF 311018), this protein is Pyrroloquinoline-quinone synthase.